A 383-amino-acid chain; its full sequence is PqqA peptide cyclase (383 aa).

In terms of domain architecture, Radical SAM core spans 11-226; sequence PGPPLWLLAE…TNQWREKLAA (216 aa). Cysteine 25, cysteine 29, and cysteine 32 together coordinate [4Fe-4S] cluster.

This sequence belongs to the radical SAM superfamily. PqqE family. In terms of assembly, interacts with PqqD. The interaction is necessary for activity of PqqE. [4Fe-4S] cluster is required as a cofactor.

It catalyses the reaction [PQQ precursor protein] + S-adenosyl-L-methionine = E-Y cross-linked-[PQQ precursor protein] + 5'-deoxyadenosine + L-methionine + H(+). Its pathway is cofactor biosynthesis; pyrroloquinoline quinone biosynthesis. Its function is as follows. Catalyzes the cross-linking of a glutamate residue and a tyrosine residue in the PqqA protein as part of the biosynthesis of pyrroloquinoline quinone (PQQ). The chain is PqqA peptide cyclase from Azotobacter vinelandii (strain DJ / ATCC BAA-1303).